Reading from the N-terminus, the 355-residue chain is UDP-N-acetylglucosamine--N-acetylmuramyl-(pentapeptide) pyrophosphoryl-undecaprenol N-acetylglucosamine transferase (355 aa).

UDP-N-acetyl-alpha-D-glucosamine is bound by residues 15 to 17 (TGG), asparagine 127, arginine 163, serine 191, isoleucine 244, 263 to 268 (ALTVSE), and glutamine 288.

The protein belongs to the glycosyltransferase 28 family. MurG subfamily.

It localises to the cell inner membrane. The catalysed reaction is di-trans,octa-cis-undecaprenyl diphospho-N-acetyl-alpha-D-muramoyl-L-alanyl-D-glutamyl-meso-2,6-diaminopimeloyl-D-alanyl-D-alanine + UDP-N-acetyl-alpha-D-glucosamine = di-trans,octa-cis-undecaprenyl diphospho-[N-acetyl-alpha-D-glucosaminyl-(1-&gt;4)]-N-acetyl-alpha-D-muramoyl-L-alanyl-D-glutamyl-meso-2,6-diaminopimeloyl-D-alanyl-D-alanine + UDP + H(+). The protein operates within cell wall biogenesis; peptidoglycan biosynthesis. Its function is as follows. Cell wall formation. Catalyzes the transfer of a GlcNAc subunit on undecaprenyl-pyrophosphoryl-MurNAc-pentapeptide (lipid intermediate I) to form undecaprenyl-pyrophosphoryl-MurNAc-(pentapeptide)GlcNAc (lipid intermediate II). The protein is UDP-N-acetylglucosamine--N-acetylmuramyl-(pentapeptide) pyrophosphoryl-undecaprenol N-acetylglucosamine transferase of Escherichia coli O139:H28 (strain E24377A / ETEC).